Here is a 202-residue protein sequence, read N- to C-terminus: Ribonuclease HII (202 aa).

The RNase H type-2 domain maps to 12 to 201; the sequence is LLIAGVDEAG…VRQLKLFIPE (190 aa). A divalent metal cation is bound by residues D18, E19, and D110.

It belongs to the RNase HII family. Mn(2+) is required as a cofactor. Requires Mg(2+) as cofactor.

It localises to the cytoplasm. The enzyme catalyses Endonucleolytic cleavage to 5'-phosphomonoester.. Endonuclease that specifically degrades the RNA of RNA-DNA hybrids. The sequence is that of Ribonuclease HII from Coxiella burnetii (strain CbuG_Q212) (Coxiella burnetii (strain Q212)).